A 191-amino-acid polypeptide reads, in one-letter code: 3-isopropylmalate dehydratase small subunit (191 aa).

The protein belongs to the LeuD family. LeuD type 1 subfamily. Heterodimer of LeuC and LeuD.

The enzyme catalyses (2R,3S)-3-isopropylmalate = (2S)-2-isopropylmalate. The protein operates within amino-acid biosynthesis; L-leucine biosynthesis; L-leucine from 3-methyl-2-oxobutanoate: step 2/4. Functionally, catalyzes the isomerization between 2-isopropylmalate and 3-isopropylmalate, via the formation of 2-isopropylmaleate. The chain is 3-isopropylmalate dehydratase small subunit from Staphylococcus haemolyticus (strain JCSC1435).